We begin with the raw amino-acid sequence, 176 residues long: ATP-dependent protease subunit HslV (176 aa).

Threonine 6 is a catalytic residue. Na(+)-binding residues include glycine 161, cysteine 164, and threonine 167.

Belongs to the peptidase T1B family. HslV subfamily. In terms of assembly, a double ring-shaped homohexamer of HslV is capped on each side by a ring-shaped HslU homohexamer. The assembly of the HslU/HslV complex is dependent on binding of ATP.

It is found in the cytoplasm. The catalysed reaction is ATP-dependent cleavage of peptide bonds with broad specificity.. Allosterically activated by HslU binding. Functionally, protease subunit of a proteasome-like degradation complex believed to be a general protein degrading machinery. This chain is ATP-dependent protease subunit HslV, found in Thermotoga sp. (strain RQ2).